Here is a 265-residue protein sequence, read N- to C-terminus: Mlc titration factor A (265 aa).

Zn(2+)-binding residues include His111, His148, His152, and Glu211.

This sequence belongs to the MtfA family. Interacts with Mlc with high affinity. Zn(2+) is required as a cofactor.

Its subcellular location is the cytoplasm. Its activity is regulated as follows. Proteolytic activity is stimulated by interaction with Mlc. Addition of the chelators EDTA or phenanthroline significantly reduces the peptidase activity, whereas the addition of other protease inhibitors has much less effect. Involved in the modulation of the activity of the glucose-phosphotransferase system (glucose-PTS). Interacts with the transcriptional repressor Mlc, preventing its interaction with DNA and leading to the modulation of expression of genes regulated by Mlc, including ptsG, which encodes the PTS system glucose-specific EIICB component. In terms of biological role, shows zinc-dependent metallopeptidase activity. In vitro, can cleave several artificial substrates. The greatest activity and specificity is observed for L-alanine fused to 4-nitroanilide (L-alanine-pNA). Shows significantly lower activity towards L-arginine-pNA, L-proline-pNA, hippuryl-L-phenylalanine and hippuryl-L-arginine, and cannot use FTC-casein. Mlc does not appear to be a biologically relevant peptidase substrate. Biologically relevant targets may have a function in growth transition under changing environmental conditions. In Escherichia coli (strain K12), this protein is Mlc titration factor A.